Consider the following 447-residue polypeptide: Zinc finger protein ZIC 1 (447 aa).

A C2H2-type 1; atypical zinc finger spans residues 225–260; that stretch reads LICKWIEPEQLANPKKSCNKTFSTMHELVTHVTVEH. Residues 269-296 form a C2H2-type 2; atypical zinc finger; sequence HICFWEECPREGKPFKAKYKLVNHIRVH. 3 C2H2-type zinc fingers span residues 302 to 326, 332 to 356, and 362 to 384; these read FPCP…KRTH, FKCE…MHVH, and YLCK…MKVH. The tract at residues 375–431 is disordered; it reads SSLRKHMKVHESSSQGSQPSPAASSGYESSTPPTIVSPSTDNPTTSSLSPSSSAVHH. The segment covering 386-427 has biased composition (low complexity); that stretch reads SSSQGSQPSPAASSGYESSTPPTIVSPSTDNPTTSSLSPSSS.

This sequence belongs to the GLI C2H2-type zinc-finger protein family. Interacts (via the C2H2-type domains 3, 4 and 5) with MDFIC (via the C2H2-type domains 3, 4 and 5). Interacts with GLI1; the interaction enhances transcription activation. Interacts with GLI2. Interacts with GLI3; the interaction enhances transcription activation. CNS. A high level expression is seen in the cerebellum. Detected in the nuclei of the cerebellar granule cell lineage from the progenitor cells of the external germinal layer to the postmigrated cells of the internal granular layer. Detected in medulloblastoma (26/29 cases), but not present in all other tumors examined.

It localises to the nucleus. Its subcellular location is the cytoplasm. Its function is as follows. Acts as a transcriptional activator. Involved in neurogenesis. Plays important roles in the early stage of organogenesis of the CNS, as well as during dorsal spinal cord development and maturation of the cerebellum. Involved in the spatial distribution of mossy fiber (MF) neurons within the pontine gray nucleus (PGN). Plays a role in the regulation of MF axon pathway choice. Promotes MF migration towards ipsilaterally-located cerebellar territories. May have a role in shear flow mechanotransduction in osteocytes. Retains nuclear GLI1 and GLI3 in the cytoplasm. Binds to the minimal GLI-consensus sequence 5'-TGGGTGGTC-3'. The polypeptide is Zinc finger protein ZIC 1 (ZIC1) (Homo sapiens (Human)).